We begin with the raw amino-acid sequence, 455 residues long: UDP-N-acetylmuramoylalanine--D-glutamate ligase (455 aa).

117 to 123 (GTNGKTT) contacts ATP.

The protein belongs to the MurCDEF family.

It is found in the cytoplasm. It catalyses the reaction UDP-N-acetyl-alpha-D-muramoyl-L-alanine + D-glutamate + ATP = UDP-N-acetyl-alpha-D-muramoyl-L-alanyl-D-glutamate + ADP + phosphate + H(+). Its pathway is cell wall biogenesis; peptidoglycan biosynthesis. Its function is as follows. Cell wall formation. Catalyzes the addition of glutamate to the nucleotide precursor UDP-N-acetylmuramoyl-L-alanine (UMA). The protein is UDP-N-acetylmuramoylalanine--D-glutamate ligase of Alkaliphilus metalliredigens (strain QYMF).